The primary structure comprises 294 residues: 4-hydroxy-tetrahydrodipicolinate synthase (294 aa).

Thr44 is a pyruvate binding site. Catalysis depends on Tyr132, which acts as the Proton donor/acceptor. The active-site Schiff-base intermediate with substrate is the Lys161. Ile206 contributes to the pyruvate binding site.

It belongs to the DapA family. In terms of assembly, homotetramer; dimer of dimers.

The protein localises to the cytoplasm. It catalyses the reaction L-aspartate 4-semialdehyde + pyruvate = (2S,4S)-4-hydroxy-2,3,4,5-tetrahydrodipicolinate + H2O + H(+). Its pathway is amino-acid biosynthesis; L-lysine biosynthesis via DAP pathway; (S)-tetrahydrodipicolinate from L-aspartate: step 3/4. Catalyzes the condensation of (S)-aspartate-beta-semialdehyde [(S)-ASA] and pyruvate to 4-hydroxy-tetrahydrodipicolinate (HTPA). This chain is 4-hydroxy-tetrahydrodipicolinate synthase, found in Thermotoga neapolitana (strain ATCC 49049 / DSM 4359 / NBRC 107923 / NS-E).